The chain runs to 419 residues: [Butirosin acyl-carrier protein]--L-glutamate ligase (419 aa).

Residues 144-345 (RRLMERNGFN…FVESRVLVFN (202 aa)) form the ATP-grasp domain. Position 174-231 (174-231 (ISAGFSKCVLKVPYGSSGKGLKVIDNERNFRFLLNYIQNRQTNVDLLLEGWHPHRLSL)) interacts with ATP. Residues Asp-298, Glu-312, and Asn-314 each coordinate Mg(2+). Positions 298, 312, and 314 each coordinate Mn(2+).

Monomer. Mg(2+) serves as cofactor. The cofactor is Mn(2+).

The enzyme catalyses holo-[BtrI ACP] + L-glutamate + ATP = gamma-L-glutamyl-[BtrI ACP] + ADP + phosphate. It carries out the reaction 4-aminobutanoyl-[BtrI ACP] + L-glutamate + ATP = 4-(gamma-L-glutamylamino)butanoyl-[BtrI ACP] + ADP + phosphate + H(+). The protein operates within antibiotic biosynthesis; butirosin biosynthesis. In terms of biological role, ATP-dependent ligase that catalyzes 2 steps in the biosynthesis of the side chain of the aminoglycoside antibiotics in the biosynthetic pathway of butirosin. Mediates the addition of one molecule of L-glutamate to a dedicated acyl-carrier protein. Following decarboxylation of the product by BtrK, adds a second L-glutamate molecule. The protein is [Butirosin acyl-carrier protein]--L-glutamate ligase (btrJ) of Niallia circulans (Bacillus circulans).